We begin with the raw amino-acid sequence, 207 residues long: Octanoyltransferase (207 aa).

The BPL/LPL catalytic domain occupies 27-203 (ASTEDELWVV…HLETQFTPKA (177 aa)). Substrate-binding positions include 66-73 (RGGQITYH), 133-135 (SLG), and 146-148 (GLA). The active-site Acyl-thioester intermediate is cysteine 164.

Belongs to the LipB family.

It localises to the cytoplasm. It catalyses the reaction octanoyl-[ACP] + L-lysyl-[protein] = N(6)-octanoyl-L-lysyl-[protein] + holo-[ACP] + H(+). It participates in protein modification; protein lipoylation via endogenous pathway; protein N(6)-(lipoyl)lysine from octanoyl-[acyl-carrier-protein]: step 1/2. Its function is as follows. Catalyzes the transfer of endogenously produced octanoic acid from octanoyl-acyl-carrier-protein onto the lipoyl domains of lipoate-dependent enzymes. Lipoyl-ACP can also act as a substrate although octanoyl-ACP is likely to be the physiological substrate. The protein is Octanoyltransferase of Neisseria meningitidis serogroup C / serotype 2a (strain ATCC 700532 / DSM 15464 / FAM18).